Consider the following 261-residue polypeptide: Gap junction beta-6 protein (261 aa).

The Cytoplasmic portion of the chain corresponds to 1–22 (MDWGTLHTFVGGVNKHSTSIGK). A helical transmembrane segment spans residues 23–45 (VWVTVLFVFRVMILVVAAQEVWG). At 46–75 (DEQEDFVCNTLQPGCRNVCYDHFFPVSHIR) the chain is on the extracellular side. Residues 76 to 98 (LWALQLIFVSTPALLVAMHVAYY) form a helical membrane-spanning segment. Over 99-131 (RHEAARRFRRGETRSEFKDLEDIKRQKVRIEGS) the chain is Cytoplasmic. A helical membrane pass occupies residues 132–154 (LWWTYTSSIFFRIVFEAAFMYVF). Residues 155-192 (YFLYNGYHLPWVLKCGIQPCPNLVDCFISRPTEKTVFT) lie on the Extracellular side of the membrane. Residues 193–215 (IFMISASVICMLLNVAELCYLLL) form a helical membrane-spanning segment. Topologically, residues 216–261 (KVCFRRSKRAQTQKAPPNHALKESKQNEMNELISEGGQNAITGFPS) are cytoplasmic.

The protein belongs to the connexin family. Beta-type (group I) subfamily. A connexon is composed of a hexamer of connexins. Interacts with CNST.

The protein localises to the cell membrane. It is found in the cell junction. Its subcellular location is the gap junction. One gap junction consists of a cluster of closely packed pairs of transmembrane channels, the connexons, through which materials of low MW diffuse from one cell to a neighboring cell. This is Gap junction beta-6 protein (GJB6) from Bos taurus (Bovine).